The following is a 674-amino-acid chain: Pentatricopeptide repeat-containing protein At4g17616 (674 aa).

5 PPR repeats span residues 409–443 (GSRLCADVIDACVAIGWLEAAHDILDDMNSAGYPM), 444–478 (ELATYRMVLSGYYKSKMLRNAEVLLKQMTKAGLIT), 519–553 (MLYELNSSLYYFCKAKMQGDALITYRKIPKMKIPP), 554–584 (TVQSFWILIDMYSSLGMYREITIVWGDIKRN), and 593–627 (TQDLLEKLVVNFLRGGYFERVMELISYMKENDMYN).

It belongs to the PPR family. P subfamily.

The polypeptide is Pentatricopeptide repeat-containing protein At4g17616 (Arabidopsis thaliana (Mouse-ear cress)).